The following is a 183-amino-acid chain: Putative manganese efflux pump MntP (183 aa).

6 helical membrane-spanning segments follow: residues 8 to 28 (MIAL…VALG), 39 to 59 (IFYI…VGMA), 68 to 88 (FGSI…GQMI), 108 to 128 (LFFA…LGIF), 133 to 153 (MATI…GLLV), and 162 to 182 (GSYS…KLLF).

The protein belongs to the MntP (TC 9.B.29) family.

The protein localises to the cell membrane. Its function is as follows. Probably functions as a manganese efflux pump. This chain is Putative manganese efflux pump MntP, found in Geobacillus thermodenitrificans (strain NG80-2).